The primary structure comprises 288 residues: Syntaxin-1A (288 aa).

A compositionally biased stretch (basic and acidic residues) spans M1–D13. Residues M1–V20 are disordered. Over M1–K265 the chain is Cytoplasmic. Residues S14, S64, and S95 each carry the phosphoserine modification. Residues D68–S109 are a coiled coil. S188 bears the Phosphoserine; by DAPK1 mark. Residues L192 to A254 form the t-SNARE coiled-coil homology domain. Glycyl lysine isopeptide (Lys-Gly) (interchain with G-Cter in SUMO) cross-links involve residues K252, K253, and K256. A helical; Anchor for type IV membrane protein transmembrane segment spans residues I266–I286. Residues F287–G288 are Extracellular-facing.

The protein belongs to the syntaxin family. Part of the SNARE core complex containing SNAP25, VAMP2 and STX1A; this complex constitutes the basic catalytic machinery of the complex neurotransmitter release apparatus. The SNARE complex interacts with CPLX1. Interacts with STXBP1. The interaction with STXBP1 promotes assembly of the SNARE complex. Interacts (via C-terminus) with KCNB1 (via C-terminus); the interaction increases in a calcium-dependent manner and induces a pore-independent enhancement of exocytosis in neuroendocrine cells, chromaffin cells, pancreatic beta cells and from the soma of dorsal root ganglia (DRG) neurons. Interacts with SYTL4. Interacts with STXBP6. Interacts with PLCL1 (via C2 domain). Interacts with OTOF. Interacts with LGI3. Interacts (via the H3 domain) with SLC6A4 (via the N-terminus); this interaction regulates SLC4A6 channel conductance in thalamocortical neurons. Interacts with SYT6 and SYT8; the interaction is Ca(2+)-dependent. Interacts with VAMP8. Interacts with SNAP23. Interacts with VAPA and SYBU. Interacts with PRRT2. Interacts with SEPT8. Interacts with STXBP5L. Interacts with synaptotagmin-1/SYT1. Interacts with SEPTIN5; in the cerebellar cortex. Interacts with SEPTIN4; in the striatum. Phosphorylated by CK2. Phosphorylation at Ser-188 by DAPK1 significantly decreases its interaction with STXBP1. Post-translationally, phosphorylated by CK2. Phosphorylation at Ser-188 by DAPK1 significantly decreases its interaction with STXBP1. In terms of processing, sumoylated, sumoylation is required for regulation of synaptic vesicle endocytosis. Expressed in the striatum (at protein level). Expressed in the ileum.

It is found in the cytoplasmic vesicle. The protein localises to the secretory vesicle. It localises to the synaptic vesicle membrane. Its subcellular location is the synapse. The protein resides in the synaptosome. It is found in the cell membrane. Plays an essential role in hormone and neurotransmitter calcium-dependent exocytosis and endocytosis. Part of the SNARE (Soluble NSF Attachment Receptor) complex composed of SNAP25, STX1A and VAMP2 which mediates the fusion of synaptic vesicles with the presynaptic plasma membrane. STX1A and SNAP25 are localized on the plasma membrane while VAMP2 resides in synaptic vesicles. The pairing of the three SNAREs from the N-terminal SNARE motifs to the C-terminal anchors leads to the formation of the SNARE complex, which brings membranes into close proximity and results in final fusion. Participates in the calcium-dependent regulation of acrosomal exocytosis in sperm. Also plays an important role in the exocytosis of hormones such as insulin or glucagon-like peptide 1 (GLP-1). This chain is Syntaxin-1A (Stx1a), found in Mus musculus (Mouse).